Here is a 231-residue protein sequence, read N- to C-terminus: Inner membrane protein YohK (231 aa).

Residue Met-1 is a topological domain, periplasmic. Residues 2–22 (MANIWWSLPLTLIVFFAARKL) traverse the membrane as a helical segment. Topologically, residues 23 to 29 (AARYKFP) are cytoplasmic. A helical transmembrane segment spans residues 30-50 (LLNPLLVAMVVIIPFLMLTGI). Residues 51-90 (SYDSYFKGSEVLNDLLQPAVVALAYPLYEQLHQIRARWKS) lie on the Periplasmic side of the membrane. The chain crosses the membrane as a helical span at residues 91 to 111 (IITICFIGSVVAMVTGTSVAL). The Cytoplasmic portion of the chain corresponds to 112 to 118 (LMGASPE). Helical transmembrane passes span 119–139 (IAASILPKSVTTPIAMAVGGS) and 140–160 (IGGIPAISAVCVIFVGILGAV). The Cytoplasmic segment spans residues 161-208 (FGHTLLNAMRIRTKAARGLAMGTASHALGTARCAELDYQEGAFSSLAL). Residues 209–229 (VLCGIITSLIAPFLFPIILAV) form a helical membrane-spanning segment. Topologically, residues 230-231 (MG) are periplasmic.

This sequence belongs to the YohK (E.coli)/YwbG (IPA-22R) (B.subtilis) family.

Its subcellular location is the cell inner membrane. This is Inner membrane protein YohK (yohK) from Escherichia coli (strain K12).